The primary structure comprises 1179 residues: Putative ankyrin repeat protein RF_0381 (1179 aa).

ANK repeat units lie at residues 282 to 311 (NGYQSIHLVISGGNKGNIELQIRSTTMHRQ), 604 to 633 (NKDQLLRLGLQLGCVESVPLLITHGANPNA), 637 to 666 (HGVISLHCAAKNGNLDLAKLLAKNGADVNA), 670 to 699 (NGETVLHYAVKSGNLHLVKWLIENQANIHA), 703 to 732 (NGETVLHYAVSFNNSDLVYLLIAYGADVNA), 736 to 765 (NGLTALHYAVYDGNLDLVSLLISHGADVNA), 769 to 798 (SGETILYSAVDYGSPDLVYLLIAYGADVNA), 802 to 831 (NGETVLHYAVESGNLDLVSLLIHNGANVNN), 833 to 860 (KTILHFAAKSGNLNLVNWLIKNKADIHA), 864 to 893 (SGETILHFAAESGNLNLVNWLIKNKADIHA), 897 to 926 (SGETILHFAAKSGNLNLVNWLIKNKADIHA), 930 to 959 (SGETILHFAAKSGNLNLVNWLIKNKADIHA), 963 to 992 (SGETILHFAAESGNLNLVSLLIHNGTDINT), 996 to 1025 (DGLTALHYAVESGNLNLVSLLIHKGIDVNA), 1029 to 1058 (SGETILHFAVDLGSLDLVSLLMVRGADVNA), 1062 to 1091 (DGLTALHYAVESDNLALVSLLMVYGADVNA), 1095 to 1124 (SGETPLHYAVIFNSLDLVSLLIHNGADINT), and 1128 to 1157 (SGETVLNSIMEFNNCNILKSFILGGADINL).

The protein is Putative ankyrin repeat protein RF_0381 of Rickettsia felis (strain ATCC VR-1525 / URRWXCal2) (Rickettsia azadi).